A 486-amino-acid chain; its full sequence is UDP-N-acetylmuramoyl-L-alanyl-D-glutamate--2,6-diaminopimelate ligase (486 aa).

S34 contacts UDP-N-acetyl-alpha-D-muramoyl-L-alanyl-D-glutamate. 112–118 (GTAGKTS) serves as a coordination point for ATP. UDP-N-acetyl-alpha-D-muramoyl-L-alanyl-D-glutamate-binding positions include 154–155 (TT), S181, Q187, and R189. At K221 the chain carries N6-carboxylysine. Meso-2,6-diaminopimelate is bound by residues R385, 409–412 (DNPR), G457, and E461. A Meso-diaminopimelate recognition motif motif is present at residues 409–412 (DNPR).

Belongs to the MurCDEF family. MurE subfamily. Requires Mg(2+) as cofactor. In terms of processing, carboxylation is probably crucial for Mg(2+) binding and, consequently, for the gamma-phosphate positioning of ATP.

The protein localises to the cytoplasm. The enzyme catalyses UDP-N-acetyl-alpha-D-muramoyl-L-alanyl-D-glutamate + meso-2,6-diaminopimelate + ATP = UDP-N-acetyl-alpha-D-muramoyl-L-alanyl-gamma-D-glutamyl-meso-2,6-diaminopimelate + ADP + phosphate + H(+). Its pathway is cell wall biogenesis; peptidoglycan biosynthesis. Its function is as follows. Catalyzes the addition of meso-diaminopimelic acid to the nucleotide precursor UDP-N-acetylmuramoyl-L-alanyl-D-glutamate (UMAG) in the biosynthesis of bacterial cell-wall peptidoglycan. This Rhizobium meliloti (strain 1021) (Ensifer meliloti) protein is UDP-N-acetylmuramoyl-L-alanyl-D-glutamate--2,6-diaminopimelate ligase.